A 524-amino-acid polypeptide reads, in one-letter code: Phosphoenolpyruvate carboxykinase (ATP) (524 aa).

The substrate site is built by R52, Y188, and K194. ATP contacts are provided by residues K194, H213, and 229-237 (GLSGTGKTT). Residues K194 and H213 each contribute to the Mn(2+) site. A Mn(2+)-binding site is contributed by D250. ATP-binding residues include E278, R314, and T439. A substrate-binding site is contributed by R314.

The protein belongs to the phosphoenolpyruvate carboxykinase (ATP) family. Mn(2+) serves as cofactor.

The protein localises to the cytoplasm. It catalyses the reaction oxaloacetate + ATP = phosphoenolpyruvate + ADP + CO2. The protein operates within carbohydrate biosynthesis; gluconeogenesis. In terms of biological role, involved in the gluconeogenesis. Catalyzes the conversion of oxaloacetate (OAA) to phosphoenolpyruvate (PEP) through direct phosphoryl transfer between the nucleoside triphosphate and OAA. The polypeptide is Phosphoenolpyruvate carboxykinase (ATP) (Campylobacter jejuni subsp. jejuni serotype O:2 (strain ATCC 700819 / NCTC 11168)).